We begin with the raw amino-acid sequence, 106 residues long: Small ribosomal subunit protein mS33 (106 aa).

S2 bears the N-acetylserine mark. Residues 81 to 106 (EQRRLKKLRGKGKPRKGEGKRATKKK) are disordered. Positions 84 to 94 (RLKKLRGKGKP) are enriched in basic residues. Residues 95 to 106 (RKGEGKRATKKK) show a composition bias toward basic and acidic residues.

It belongs to the mitochondrion-specific ribosomal protein mS33 family. Component of the mitochondrial ribosome small subunit (28S) which comprises a 12S rRNA and about 30 distinct proteins.

It is found in the mitochondrion. The polypeptide is Small ribosomal subunit protein mS33 (Mrps33) (Mus musculus (Mouse)).